Consider the following 219-residue polypeptide: Thiamine-phosphate synthase (219 aa).

4-amino-2-methyl-5-(diphosphooxymethyl)pyrimidine-binding positions include 44–48 (QFREK) and N79. Mg(2+) contacts are provided by D80 and D99. Residue S117 participates in 4-amino-2-methyl-5-(diphosphooxymethyl)pyrimidine binding. 2-[(2R,5Z)-2-carboxy-4-methylthiazol-5(2H)-ylidene]ethyl phosphate is bound at residue 143–145 (TST). K146 lines the 4-amino-2-methyl-5-(diphosphooxymethyl)pyrimidine pocket. 2-[(2R,5Z)-2-carboxy-4-methylthiazol-5(2H)-ylidene]ethyl phosphate is bound by residues G175 and 195-196 (IS).

It belongs to the thiamine-phosphate synthase family. Requires Mg(2+) as cofactor.

It catalyses the reaction 2-[(2R,5Z)-2-carboxy-4-methylthiazol-5(2H)-ylidene]ethyl phosphate + 4-amino-2-methyl-5-(diphosphooxymethyl)pyrimidine + 2 H(+) = thiamine phosphate + CO2 + diphosphate. It carries out the reaction 2-(2-carboxy-4-methylthiazol-5-yl)ethyl phosphate + 4-amino-2-methyl-5-(diphosphooxymethyl)pyrimidine + 2 H(+) = thiamine phosphate + CO2 + diphosphate. The catalysed reaction is 4-methyl-5-(2-phosphooxyethyl)-thiazole + 4-amino-2-methyl-5-(diphosphooxymethyl)pyrimidine + H(+) = thiamine phosphate + diphosphate. It functions in the pathway cofactor biosynthesis; thiamine diphosphate biosynthesis; thiamine phosphate from 4-amino-2-methyl-5-diphosphomethylpyrimidine and 4-methyl-5-(2-phosphoethyl)-thiazole: step 1/1. Its function is as follows. Condenses 4-methyl-5-(beta-hydroxyethyl)thiazole monophosphate (THZ-P) and 2-methyl-4-amino-5-hydroxymethyl pyrimidine pyrophosphate (HMP-PP) to form thiamine monophosphate (TMP). The sequence is that of Thiamine-phosphate synthase from Bacillus cereus (strain AH187).